A 175-amino-acid chain; its full sequence is NAD(P)H-quinone oxidoreductase subunit I, chloroplastic (175 aa).

4Fe-4S ferredoxin-type domains follow at residues 55–84 (GRIHFEFDKCIACEVCVRVCPINLPVVNWE) and 95–124 (QTYSIDFGVCIFCGNCVEYCPTNCLSMTEE). 8 residues coordinate [4Fe-4S] cluster: C64, C67, C70, C74, C104, C107, C110, and C114.

Belongs to the complex I 23 kDa subunit family. In terms of assembly, NDH is composed of at least 16 different subunits, 5 of which are encoded in the nucleus. Requires [4Fe-4S] cluster as cofactor.

It localises to the plastid. Its subcellular location is the chloroplast thylakoid membrane. The catalysed reaction is a plastoquinone + NADH + (n+1) H(+)(in) = a plastoquinol + NAD(+) + n H(+)(out). The enzyme catalyses a plastoquinone + NADPH + (n+1) H(+)(in) = a plastoquinol + NADP(+) + n H(+)(out). Its function is as follows. NDH shuttles electrons from NAD(P)H:plastoquinone, via FMN and iron-sulfur (Fe-S) centers, to quinones in the photosynthetic chain and possibly in a chloroplast respiratory chain. The immediate electron acceptor for the enzyme in this species is believed to be plastoquinone. Couples the redox reaction to proton translocation, and thus conserves the redox energy in a proton gradient. The protein is NAD(P)H-quinone oxidoreductase subunit I, chloroplastic of Chlorokybus atmophyticus (Soil alga).